A 178-amino-acid polypeptide reads, in one-letter code: MSRIGYKEIDLPAGVEVSQEGNVVTVKGPKGTLSREISPLITMSVEGNVVKFERSGEDNKVRALHGTTRANVNNMVEGVVNGFKKTLKLVGVGYRAQFKGDKLILTVGYSNPVEMTKPAEVEIAVPDNTTIEISGIDKQEVGDFAAEVRAVRSPEPYKGKGIRYENEHIVRNEGKTGK.

The protein belongs to the universal ribosomal protein uL6 family. In terms of assembly, part of the 50S ribosomal subunit.

In terms of biological role, this protein binds to the 23S rRNA, and is important in its secondary structure. It is located near the subunit interface in the base of the L7/L12 stalk, and near the tRNA binding site of the peptidyltransferase center. This is Large ribosomal subunit protein uL6 from Limosilactobacillus fermentum (strain NBRC 3956 / LMG 18251) (Lactobacillus fermentum).